Here is a 57-residue protein sequence, read N- to C-terminus: uncharacterized protein (57 aa).

A helical transmembrane segment spans residues 34-54 (AALLDAAALVVIPGLLTVAAV).

It localises to the membrane. This is an uncharacterized protein from Dictyostelium discoideum (Social amoeba).